Reading from the N-terminus, the 120-residue chain is NAD(P)H-quinone oxidoreductase subunit 3, chloroplastic (120 aa).

The next 3 helical transmembrane spans lie at 10–30 (FWFF…TSKL), 64–84 (MFAL…PWAM), and 89–109 (LGVY…IGLV).

The protein belongs to the complex I subunit 3 family. As to quaternary structure, NDH is composed of at least 16 different subunits, 5 of which are encoded in the nucleus.

The protein resides in the plastid. The protein localises to the chloroplast thylakoid membrane. The catalysed reaction is a plastoquinone + NADH + (n+1) H(+)(in) = a plastoquinol + NAD(+) + n H(+)(out). The enzyme catalyses a plastoquinone + NADPH + (n+1) H(+)(in) = a plastoquinol + NADP(+) + n H(+)(out). NDH shuttles electrons from NAD(P)H:plastoquinone, via FMN and iron-sulfur (Fe-S) centers, to quinones in the photosynthetic chain and possibly in a chloroplast respiratory chain. The immediate electron acceptor for the enzyme in this species is believed to be plastoquinone. Couples the redox reaction to proton translocation, and thus conserves the redox energy in a proton gradient. The protein is NAD(P)H-quinone oxidoreductase subunit 3, chloroplastic of Chaetosphaeridium globosum (Charophycean green alga).